The sequence spans 1270 residues: Activating transcription factor 7-interacting protein 1 (1270 aa).

Met1 is modified (N-acetylmethionine). A Glycyl lysine isopeptide (Lys-Gly) (interchain with G-Cter in SUMO2) cross-link involves residue Lys33. Residues Ser57 and Ser113 each carry the phosphoserine modification. 2 disordered regions span residues 104–223 (DDDL…ISGD) and 235–402 (TSVD…EDET). Thr118 carries the phosphothreonine modification. Low complexity-rich tracts occupy residues 132–203 (GDPA…SSGD) and 248–269 (DPAS…SDDL). Composition is skewed to basic and acidic residues over residues 310–327 (SNKD…EKLE) and 333–343 (DSLDEKNKADN). The span at 347-356 (ANEETLETDD) shows a compositional bias: acidic residues. Residues 363 to 373 (RPPENEKKVEE) are compositionally biased toward basic and acidic residues. A phosphoserine mark is found at Ser445, Ser473, Ser474, Ser477, Ser479, and Ser496. Disordered stretches follow at residues 455–570 (TSLL…SKRR), 658–685 (EDLK…NSNN), 822–862 (PPTV…PTAS), and 886–906 (RTSL…NRGP). A compositionally biased stretch (polar residues) spans 474–486 (SFGSPSKQESSES). Residues 496-509 (SDEEDISGEKDESE) show a composition bias toward acidic residues. Positions 524–552 (SNEKDNKPEEEEQVIHEDDERPSEKNEFS) are enriched in basic and acidic residues. The Nuclear localization signal motif lies at 553 to 571 (RRKRSKSEDMDNVQSKRRR). Lys558 participates in a covalent cross-link: Glycyl lysine isopeptide (Lys-Gly) (interchain with G-Cter in SUMO2). Ser559 is subject to Phosphoserine. The interval 562-817 (MDNVQSKRRR…NQPSGNVEFI (256 aa)) is interaction with SETDB1. Positions 617–665 (KTLAELKTRVEKIECNKRHKTVLTELQAKIARLTKRFEAAKEDLKKRHE) form a coiled coil. The residue at position 673 (Ser673) is a Phosphoserine. The segment covering 822-834 (PPTVSGLTKNPVS) has biased composition (polar residues). Residues 843–854 (KPNNVPSVPSPS) show a composition bias toward low complexity. Position 899 is a phosphoserine (Ser899). Residues Lys910 and Lys938 each participate in a glycyl lysine isopeptide (Lys-Gly) (interchain with G-Cter in SUMO2) cross-link. Polar residues-rich tracts occupy residues 918 to 942 (TSSA…TIDA) and 950 to 964 (DSTS…SDSS). Disordered regions lie at residues 918–1026 (TSSA…SQTT) and 1115–1160 (STGP…STSL). The interval 965–975 (GVIDLTMDDEE) is interaction with SUMO. 2 stretches are compositionally biased toward polar residues: residues 988-999 (TPVSTMSSSQPV) and 1016-1026 (GVPTSGPSQTT). Pro residues predominate over residues 1134–1151 (PRPVHPAPLPEAPQPQRL). The interaction with MBD1 stretch occupies residues 1154 to 1270 (EAASTSLPQK…TDVISSTQSS (117 aa)). The region spanning 1160–1270 (LPQKPHLKLA…TDVISSTQSS (111 aa)) is the Fibronectin type-III domain.

It belongs to the MCAF family. As to quaternary structure, interacts with MBD1; the interaction is enhanced when MBD1 is sumoylated. Interacts with SETDB1; the interaction protects SETDB1 from proteasomal degradation and is required to stimulate histone methyltransferase activity and facilitate the conversion of dimethylated to trimethylated H3 'Lys-9'. Interacts with SUMO ubiquitin-like proteins (SUMO1, SUNO2 and SUMO3), with a preference for SUMO2 and SUMO3. Interacts with SP1, ATF7 and ZHX1. Interacts with the general transcription machinery, including ERCC2, ERCC3, GTF2E1, GTF2E2 and POLR2A. (Microbial infection) Interacts with Epstein-Barr virus BRLF1/Rta protein, leading to the regulation of host genes in Epstein-Barr virus-infected cells. Detected at low levels in breast, lung and stomach; highly up-regulated in the corresponding cancerous tissues (at protein level).

It localises to the nucleus. Its function is as follows. Recruiter that couples transcriptional factors to general transcription apparatus and thereby modulates transcription regulation and chromatin formation. Can both act as an activator or a repressor depending on the context. Required for HUSH-mediated heterochromatin formation and gene silencing. Mediates MBD1-dependent transcriptional repression, probably by recruiting complexes containing SETDB1. Stabilizes SETDB1, is required to stimulate histone methyltransferase activity of SETDB1 and facilitates the conversion of dimethylated to trimethylated H3 'Lys-9' (H3K9me3). The complex formed with MBD1 and SETDB1 represses transcription and couples DNA methylation and histone H3 'Lys-9' trimethylation (H3K9me3). Facilitates telomerase TERT and TERC gene expression by SP1 in cancer cells. In Homo sapiens (Human), this protein is Activating transcription factor 7-interacting protein 1.